The primary structure comprises 427 residues: Endothelin-1 receptor (427 aa).

A signal peptide spans 1-20; the sequence is METLCLRASFWLALVGCVIS. The Extracellular portion of the chain corresponds to 21 to 80; the sequence is DNPERYSTNLSNHVDDFTTFRGTELSFLVTTHQPTNLVLPSNGSMHNYCPQQTKITSAFK. 2 N-linked (GlcNAc...) asparagine glycosylation sites follow: asparagine 29 and asparagine 62. The helical transmembrane segment at 81 to 102 threads the bilayer; the sequence is YINTVISCTIFIVGMVGNATLL. Residues 103–112 are Cytoplasmic-facing; it reads RIIYQNKCMR. The helical transmembrane segment at 113-132 threads the bilayer; the sequence is NGPNALIASLALGDLIYVVI. Residues 133–159 lie on the Extracellular side of the membrane; the sequence is DLPINVFKLLAGRWPFDHNDFGVFLCK. A disulfide bridge links cysteine 158 with cysteine 239. Residues 160 to 181 traverse the membrane as a helical segment; that stretch reads LFPFLQKSSVGITVLNLCALSV. At 182-205 the chain is on the cytoplasmic side; that stretch reads DRYRAVASWSRVQGIGIPLVTAIE. A helical membrane pass occupies residues 206–229; that stretch reads IVSIWILSFILAIPEAIGFVMVPF. Topologically, residues 230–256 are extracellular; sequence EYRGEQHKTCMLNATSKFMEFYQDVKD. A helical membrane pass occupies residues 257–278; it reads WWLFGFYFCMPLVCTAIFYTLM. Residues 279-306 lie on the Cytoplasmic side of the membrane; it reads TCEMLNRRNGSLRIALSEHLKQRREVAK. The chain crosses the membrane as a helical span at residues 307–328; it reads TVFCLVVIFALCWFPLHLSRIL. Topologically, residues 329 to 347 are extracellular; it reads KKTVYNEMDKNRCELLSFL. The chain crosses the membrane as a helical span at residues 348–372; sequence LLMDYIGINLATMNSCINPIALYFV. Topologically, residues 373 to 427 are cytoplasmic; it reads SKKFKNCFQSCLCCCCYQSKSLMTSVPMNGTSIQWKNHDQNNHNTDRSSHKDSMN. The segment at 406–427 is disordered; it reads QWKNHDQNNHNTDRSSHKDSMN. A compositionally biased stretch (basic and acidic residues) spans 408–427; it reads KNHDQNNHNTDRSSHKDSMN. Serine 425 is modified (phosphoserine).

Belongs to the G-protein coupled receptor 1 family. Endothelin receptor subfamily. EDNRA sub-subfamily. In terms of assembly, interacts with HDAC7 and KAT5. Isoform 1, isoform 3 and isoform 4 are expressed in a variety of tissues, with highest levels in the aorta and cerebellum, followed by lung, atrium and cerebral cortex, lower levels in the placenta, kidney, adrenal gland, duodenum, colon, ventricle and liver but no expression in umbilical vein endothelial cells. Within the placenta, isoform 1, isoform 2, isoform 3 and isoform 4 are expressed in the villi and stem villi vessels.

It is found in the cell membrane. In terms of biological role, receptor for endothelin-1. Mediates its action by association with G proteins that activate a phosphatidylinositol-calcium second messenger system. The rank order of binding affinities for ET-A is: ET1 &gt; ET2 &gt;&gt; ET3. This chain is Endothelin-1 receptor, found in Homo sapiens (Human).